A 193-amino-acid polypeptide reads, in one-letter code: Transmembrane protein 276 (193 aa).

Residues 1–32 form the signal peptide; that stretch reads MTPRPGGEWSSALSHLALGAVSLHAALSTAQA. Transmembrane regions (helical) follow at residues 35 to 55, 63 to 83, 89 to 109, and 114 to 134; these read GAAA…ASGL, AGAW…FHWV, SANL…HLGA, and VAGQ…AVFT.

It localises to the membrane. This chain is Transmembrane protein 276, found in Bos taurus (Bovine).